We begin with the raw amino-acid sequence, 419 residues long: Enolase (419 aa).

Gln161 is a binding site for (2R)-2-phosphoglycerate. Glu205 serves as the catalytic Proton donor. Residues Asp240, Glu283, and Asp309 each coordinate Mg(2+). Residues Lys334, Arg363, Ser364, and Lys385 each coordinate (2R)-2-phosphoglycerate. Lys334 acts as the Proton acceptor in catalysis.

This sequence belongs to the enolase family. The cofactor is Mg(2+).

It is found in the cytoplasm. The protein localises to the secreted. The protein resides in the cell surface. It carries out the reaction (2R)-2-phosphoglycerate = phosphoenolpyruvate + H2O. It participates in carbohydrate degradation; glycolysis; pyruvate from D-glyceraldehyde 3-phosphate: step 4/5. Its function is as follows. Catalyzes the reversible conversion of 2-phosphoglycerate (2-PG) into phosphoenolpyruvate (PEP). It is essential for the degradation of carbohydrates via glycolysis. The chain is Enolase from Saccharolobus islandicus (strain Y.N.15.51 / Yellowstone #2) (Sulfolobus islandicus).